The following is a 113-amino-acid chain: Nucleoid-associated protein FMG_0513 (113 aa).

Residues 1–44 (MGNKFRGGMPGMGNMGNMMKQMQKMQRQMEETQKRLEETEVTAT) form a disordered region. The segment covering 15 to 26 (MGNMMKQMQKMQ) has biased composition (low complexity). A compositionally biased stretch (basic and acidic residues) spans 27–38 (RQMEETQKRLEE).

Belongs to the YbaB/EbfC family. Homodimer.

The protein resides in the cytoplasm. It is found in the nucleoid. In terms of biological role, binds to DNA and alters its conformation. May be involved in regulation of gene expression, nucleoid organization and DNA protection. The polypeptide is Nucleoid-associated protein FMG_0513 (Finegoldia magna (strain ATCC 29328 / DSM 20472 / WAL 2508) (Peptostreptococcus magnus)).